Here is a 119-residue protein sequence, read N- to C-terminus: Large ribosomal subunit protein uL22 (119 aa).

This sequence belongs to the universal ribosomal protein uL22 family. Part of the 50S ribosomal subunit.

This protein binds specifically to 23S rRNA; its binding is stimulated by other ribosomal proteins, e.g. L4, L17, and L20. It is important during the early stages of 50S assembly. It makes multiple contacts with different domains of the 23S rRNA in the assembled 50S subunit and ribosome. Its function is as follows. The globular domain of the protein is located near the polypeptide exit tunnel on the outside of the subunit, while an extended beta-hairpin is found that lines the wall of the exit tunnel in the center of the 70S ribosome. The polypeptide is Large ribosomal subunit protein uL22 (Chlorobium phaeobacteroides (strain DSM 266 / SMG 266 / 2430)).